Consider the following 164-residue polypeptide: ATP synthase subunit b (164 aa).

The chain crosses the membrane as a helical span at residues 8–28 (FGIIFWQTITLLFVLFILGKF).

Belongs to the ATPase B chain family. F-type ATPases have 2 components, F(1) - the catalytic core - and F(0) - the membrane proton channel. F(1) has five subunits: alpha(3), beta(3), gamma(1), delta(1), epsilon(1). F(0) has three main subunits: a(1), b(2) and c(10-14). The alpha and beta chains form an alternating ring which encloses part of the gamma chain. F(1) is attached to F(0) by a central stalk formed by the gamma and epsilon chains, while a peripheral stalk is formed by the delta and b chains.

It is found in the cell membrane. Functionally, f(1)F(0) ATP synthase produces ATP from ADP in the presence of a proton or sodium gradient. F-type ATPases consist of two structural domains, F(1) containing the extramembraneous catalytic core and F(0) containing the membrane proton channel, linked together by a central stalk and a peripheral stalk. During catalysis, ATP synthesis in the catalytic domain of F(1) is coupled via a rotary mechanism of the central stalk subunits to proton translocation. Component of the F(0) channel, it forms part of the peripheral stalk, linking F(1) to F(0). This Amoebophilus asiaticus (strain 5a2) protein is ATP synthase subunit b.